A 76-amino-acid chain; its full sequence is Spermatid nuclear transition protein 3 (76 aa).

Residues 1 to 11 (AKVTEKSWQPQ) show a composition bias toward polar residues. Disordered regions lie at residues 1 to 34 (AKVT…GKVR) and 56 to 76 (VITT…ETIP). Basic residues predominate over residues 16 to 34 (KRWKKRKTPSQPRSRGKVR).

Its subcellular location is the nucleus. It localises to the chromosome. Involved in nuclear basic protein transition: histones are replaced by spermatid specific proteins which are themselves replaced by protamines in late spermatids. The chain is Spermatid nuclear transition protein 3 (TNP3) from Sus scrofa (Pig).